A 799-amino-acid chain; its full sequence is Transcriptional activator FLO8 (799 aa).

Disordered stretches follow at residues 37–68 (TNSE…SDLK), 101–127 (AHLD…QNTF), 255–406 (TTGA…RVNK), 431–501 (NSKS…TPSV), 568–622 (ESGK…PHGF), 644–691 (VSQE…YDFD), and 705–758 (AYAS…NENQ). Positions 41–55 (QQRQQQQQQQQQQQQ) are enriched in low complexity. The 33-residue stretch at 73–105 (CKNTLNEYIFDFLTKSSLKNTAAAFAQDAHLDR) folds into the LisH domain. Positions 270–285 (DFTNVGPTQNRSQNVT) are enriched in polar residues. Positions 307–317 (NNNTTNNTTNN) are enriched in low complexity. A compositionally biased stretch (polar residues) spans 318–340 (KSPVNQPKSLKTMHSTDKPNNVP). Residues 341 to 353 (TSKSTRSRSATSK) are compositionally biased toward low complexity. The segment covering 354 to 370 (AKGKVKAGLVAKRRRKN) has biased composition (basic residues). Composition is skewed to polar residues over residues 371-395 (NTAT…SATS) and 460-480 (KAST…NSVV). Over residues 482 to 497 (GKKRSPPNTRMSRRKS) the composition is skewed to basic residues. Polar residues-rich tracts occupy residues 584–593 (SKVSASSPLS) and 660–675 (GNDS…TLST).

The protein belongs to the FLO8 family.

It localises to the nucleus. Functionally, required for diploid filamentous growth, haploid invasive growth and flocculation. Putative transcriptional activator of FLO1. The sequence is that of Transcriptional activator FLO8 (FLO8) from Saccharomyces cerevisiae (strain Lalvin EC1118 / Prise de mousse) (Baker's yeast).